Reading from the N-terminus, the 254-residue chain is MASDLEQLCSHINEKIGNIKRTLSLRNCGQEPTLKTILNKIGDEIIVVNELLNKLELEIQYQEQTNSSLKELFESLEEDYKDVEHLKENIPPHLPQVTVTQNFVNGSDLDPEEPVKVEEPAPTKKPPKEQRSIKEMPFITSDEFNGIPAYMKSRLTYCHINDVIKEINKAVVSKYKILHQPKKSMSSVARNLYHRFIDEETKETKGHYFVVEADIKEFTTLKVDKRFHGILNILRHCRRLSEVRGKGLTRYVIT.

Residues asparagine 49–isoleucine 90 are a coiled coil. A flexiple loop that anchors MAPRE1 region spans residues proline 91–arginine 131. Residues proline 92–proline 95 carry the Slightly degenerated SXLP motif; may mediate interaction with MAPRE1, targeting to microtubule plus ends, stabilization on kinetochores and is required for proper chromosome alignment to the metaphase plate motif. The tract at residues asparagine 105–arginine 131 is disordered. The segment covering glutamate 113 to arginine 131 has biased composition (basic and acidic residues). Residues arginine 131–threonine 254 are binds microtubules and protein phosphatase PP1 subunit PPP1CA. Threonine 156 bears the Phosphothreonine mark. Serine 241 is subject to Phosphoserine.

This sequence belongs to the SKA1 family. Component of the SKA complex, composed of SKA1, SKA2 and SKA3. The SKA complex is a homodimer organized around a central W-shaped coiled-coil structure, formed by the interacting domains of SKA1, SKA2, and SKA3, each end of the 'W' is extended further by the C-terminal microtubule-binding domains of SKA1 and SKA3; the complex forms extended structures on microtubules. Interacts (via SXLP motif) with MAPRE1 (via C-terminus); the interaction is direct and stabilizes the kinetochore-microtubule attachment of the SKA1 complex. Interacts (via C-terminus) with protein phosphatase PP1 subunit PPP1CA; the interaction is direct and required for recruitment of PPP1CA to the kinetochore. Interacts with the NDC80 complex; the interaction is required to establish kinetochore-microtubule end-on attachments.

It localises to the cytoplasm. The protein localises to the cytoskeleton. Its subcellular location is the spindle. The protein resides in the chromosome. It is found in the centromere. It localises to the kinetochore. The protein localises to the microtubule organizing center. Its subcellular location is the centrosome. Its function is as follows. Component of the SKA complex, a microtubule plus end-binding complex of the outer kinetochore that stabilizes spindle microtubule-kinetochore attachments, promotes alignment of chromosomes at the mitotic spindle equator (chromosome congression) and assists suppression of the spindle assembly checkpoint. Kinetochores, consisting of a centromere-associated inner segment and a microtubule-contacting outer segment, play a crucial role in chromosome segregation by mediating the physical connection between centromeric DNA and spindle microtubules. The outer kinetochore is made up of the ten-subunit KMN network complex, comprising the MIS12, NDC80 and KNL1 complexes, and auxiliary microtubule-associated components such as the SKA complex; together they connect the outer kinetochore with the inner kinetochore, bind microtubules, and mediate interactions with mitotic checkpoint proteins that delay anaphase until chromosomes are bioriented on the spindle. The SKA complex is loaded onto bioriented kinetochores and it facilitates chromosome congression by stabilizing microtubules together with MAPRE1, and end-on attachment of the NDC80 complex to depolymerizing spindle microtubules, thereby assisting the poleward-moving kinetochore in withstanding microtubule pulling forces. The complex associates with dynamic microtubule plus-ends and can track both depolymerizing and elongating microtubules. The complex recruits protein phosphatase 1 (PP1) to the kinetochore in prometaphase and metaphase, to oppose spindle assembly checkpoint signaling and promote the onset of anaphase. In the complex, it mediates interactions with microtubules. It also stimulates AURKB/Aurora B catalytic activity. During meiosis the SKA complex stabilizes the meiotic spindle and is required for its migration to the cortex. This Bos taurus (Bovine) protein is SKA complex subunit 1 (SKA1).